The sequence spans 126 residues: Integrin alpha-M (126 aa).

N-linked (GlcNAc...) asparagine glycosylation is found at N25, N78, and N106.

This sequence belongs to the integrin alpha chain family. Heterodimer of an alpha and a beta chain. ITGAM associates with ITGB2. Found in a complex with CD177 and ITGB2/CD18. Interacts with JAM3. Interacts with THBD. Interacts with TMEM268; this interaction inhibits ITGAM degradation via the endosome-lysosome pathway.

The protein localises to the cell membrane. The protein resides in the membrane raft. Integrin ITGAM/ITGB2 is implicated in various adhesive interactions of monocytes, macrophages and granulocytes as well as in mediating the uptake of complement-coated particles. It is identical with CR-3, the receptor for the iC3b fragment of the third complement component. It probably recognizes the R-G-D peptide in C3b. Integrin ITGAM/ITGB2 is also a receptor for fibrinogen, factor X and ICAM1. It recognizes P1 and P2 peptides of fibrinogen gamma chain. Regulates neutrophil migration. In association with beta subunit ITGB2/CD18, required for CD177-PRTN3-mediated activation of TNF primed neutrophils. May regulate phagocytosis-induced apoptosis in extravasated neutrophils. May play a role in mast cell development. Required with TYROBP/DAP12 in microglia to control production of microglial superoxide ions which promote the neuronal apoptosis that occurs during brain development. The sequence is that of Integrin alpha-M (ITGAM) from Cavia porcellus (Guinea pig).